The chain runs to 310 residues: Porphobilinogen deaminase (310 aa).

Cysteine 240 bears the S-(dipyrrolylmethanemethyl)cysteine mark.

It belongs to the HMBS family. Monomer. The cofactor is dipyrromethane.

The enzyme catalyses 4 porphobilinogen + H2O = hydroxymethylbilane + 4 NH4(+). Its pathway is porphyrin-containing compound metabolism; protoporphyrin-IX biosynthesis; coproporphyrinogen-III from 5-aminolevulinate: step 2/4. Tetrapolymerization of the monopyrrole PBG into the hydroxymethylbilane pre-uroporphyrinogen in several discrete steps. The protein is Porphobilinogen deaminase of Desulfosudis oleivorans (strain DSM 6200 / JCM 39069 / Hxd3) (Desulfococcus oleovorans).